A 409-amino-acid polypeptide reads, in one-letter code: Microfibrillar-associated protein 3-like (409 aa).

The signal sequence occupies residues 1-28; it reads MGLQKSHLTVCLPPSVPFLILVSTLATA. At 29 to 148 the chain is on the extracellular side; sequence KSVTNSTLNG…TLRVIFTSGD (120 aa). N-linked (GlcNAc...) asparagine glycosylation is found at Asn33, Asn37, Asn67, Asn111, and Asn135. The region spanning 47 to 141 is the Ig-like C2-type domain; that stretch reads PVIIARTDHI…GTINNTVTLR (95 aa). Cys68 and Cys125 are disulfide-bonded. The helical transmembrane segment at 149–169 threads the bilayer; the sequence is MGVYYMVVCLVAFTIVMILNI. The Cytoplasmic portion of the chain corresponds to 170–409; it reads TRLCMMSSHL…NTCIIYESHV (240 aa). Tyr287 carries the phosphotyrosine modification. A phosphoserine mark is found at Ser298, Ser303, Ser306, and Ser307. The segment at 319–395 is disordered; it reads VSVHPQSKRD…AHLETTEPAV (77 aa). The segment covering 325–340 has biased composition (basic and acidic residues); that stretch reads SKRDHVDDQEGGHFEV. Residues 356–373 show a composition bias toward low complexity; it reads TAEPSTDITTTELTSEET.

It is found in the cell membrane. Its subcellular location is the nucleus. The protein localises to the cytoplasm. Functionally, may participate in the nuclear signaling of EGFR and MAPK1/ERK2. In Mus musculus (Mouse), this protein is Microfibrillar-associated protein 3-like (Mfap3l).